The following is a 429-amino-acid chain: Adenylosuccinate synthetase (429 aa).

Residues 12 to 18 (GDEGKGK) and 40 to 42 (GHT) each bind GTP. D13 functions as the Proton acceptor in the catalytic mechanism. 2 residues coordinate Mg(2+): D13 and G40. IMP is bound by residues 13–16 (DEGK), 38–41 (NAGH), T128, R142, Q223, T238, and R302. The active-site Proton donor is H41. Position 298–304 (298–304 (VNTGRPR)) interacts with substrate. Residues R304, 330–332 (KLD), and 412–414 (GVG) contribute to the GTP site.

Belongs to the adenylosuccinate synthetase family. In terms of assembly, homodimer. The cofactor is Mg(2+).

It is found in the cytoplasm. The catalysed reaction is IMP + L-aspartate + GTP = N(6)-(1,2-dicarboxyethyl)-AMP + GDP + phosphate + 2 H(+). The protein operates within purine metabolism; AMP biosynthesis via de novo pathway; AMP from IMP: step 1/2. Its function is as follows. Plays an important role in the de novo pathway of purine nucleotide biosynthesis. Catalyzes the first committed step in the biosynthesis of AMP from IMP. The chain is Adenylosuccinate synthetase from Kocuria rhizophila (strain ATCC 9341 / DSM 348 / NBRC 103217 / DC2201).